The following is a 561-amino-acid chain: Ankyrin repeat protein OPG189 (561 aa).

7 ANK repeats span residues 68 to 98, 172 to 208, 212 to 242, 246 to 275, 279 to 307, 342 to 371, and 375 to 404; these read YGEN…NINK, YGCT…DVDK, YGNT…NIDS, NGYT…NVNA, FGTT…ELEI, YNET…DFET, and SGCT…SLKI.

It belongs to the orthopoxvirus OPG189 protein family.

In terms of biological role, contributes to viral release without involving rearrangement of host actin. In Cynomys gunnisoni (Gunnison's prairie dog), this protein is Ankyrin repeat protein OPG189 (OPG189).